The primary structure comprises 294 residues: tRNA dimethylallyltransferase (294 aa).

10–17 is a binding site for ATP; sequence GPTAVGKT. Residue 12-17 participates in substrate binding; the sequence is TAVGKT. Residues 35–38 form an interaction with substrate tRNA region; the sequence is DSQQ.

The protein belongs to the IPP transferase family. Monomer. Mg(2+) serves as cofactor.

It catalyses the reaction adenosine(37) in tRNA + dimethylallyl diphosphate = N(6)-dimethylallyladenosine(37) in tRNA + diphosphate. Functionally, catalyzes the transfer of a dimethylallyl group onto the adenine at position 37 in tRNAs that read codons beginning with uridine, leading to the formation of N6-(dimethylallyl)adenosine (i(6)A). This Streptococcus pneumoniae serotype 4 (strain ATCC BAA-334 / TIGR4) protein is tRNA dimethylallyltransferase.